A 92-amino-acid chain; its full sequence is Small ribosomal subunit protein uS19c (92 aa).

This sequence belongs to the universal ribosomal protein uS19 family.

The protein resides in the plastid. Its subcellular location is the chloroplast. Protein S19 forms a complex with S13 that binds strongly to the 16S ribosomal RNA. The chain is Small ribosomal subunit protein uS19c from Calycanthus floridus var. glaucus (Eastern sweetshrub).